Reading from the N-terminus, the 396-residue chain is Elongation factor Tu (396 aa).

One can recognise a tr-type G domain in the interval 10 to 206; that stretch reads KPHVNIGTIG…AVDESVPEPV (197 aa). The tract at residues 19–26 is G1; the sequence is GHVDHGKT. 19–26 contacts GTP; sequence GHVDHGKT. Mg(2+) is bound at residue Thr26. Residues 62–66 form a G2 region; that stretch reads GITIN. The segment at 83 to 86 is G3; sequence DAPG. Residues 83-87 and 138-141 each bind GTP; these read DAPGH and NKSD. Residues 138–141 form a G4 region; sequence NKSD. Positions 176-178 are G5; that stretch reads SGL.

It belongs to the TRAFAC class translation factor GTPase superfamily. Classic translation factor GTPase family. EF-Tu/EF-1A subfamily. Monomer.

The protein localises to the cytoplasm. The catalysed reaction is GTP + H2O = GDP + phosphate + H(+). Functionally, GTP hydrolase that promotes the GTP-dependent binding of aminoacyl-tRNA to the A-site of ribosomes during protein biosynthesis. This is Elongation factor Tu from Beutenbergia cavernae (strain ATCC BAA-8 / DSM 12333 / CCUG 43141 / JCM 11478 / NBRC 16432 / NCIMB 13614 / HKI 0122).